The sequence spans 1375 residues: DNA-directed RNA polymerase subunit beta (1375 aa).

It belongs to the RNA polymerase beta chain family. The RNAP catalytic core consists of 2 alpha, 1 beta, 1 beta' and 1 omega subunit. When a sigma factor is associated with the core the holoenzyme is formed, which can initiate transcription.

It carries out the reaction RNA(n) + a ribonucleoside 5'-triphosphate = RNA(n+1) + diphosphate. In terms of biological role, DNA-dependent RNA polymerase catalyzes the transcription of DNA into RNA using the four ribonucleoside triphosphates as substrates. This chain is DNA-directed RNA polymerase subunit beta, found in Methylibium petroleiphilum (strain ATCC BAA-1232 / LMG 22953 / PM1).